We begin with the raw amino-acid sequence, 249 residues long: Small ribosomal subunit protein uS3 (249 aa).

The 69-residue stretch at 38-106 folds into the KH type-2 domain; sequence IRDFLSKGLE…QVQLNILEVK (69 aa). A compositionally biased stretch (basic and acidic residues) spans 218-233; sequence ARDDRGSRRGRNDRPR. The disordered stretch occupies residues 218–249; that stretch reads ARDDRGSRRGRNDRPRRGGGRRRRAAEQKQEG.

It belongs to the universal ribosomal protein uS3 family. As to quaternary structure, part of the 30S ribosomal subunit. Forms a tight complex with proteins S10 and S14.

In terms of biological role, binds the lower part of the 30S subunit head. Binds mRNA in the 70S ribosome, positioning it for translation. The sequence is that of Small ribosomal subunit protein uS3 from Corynebacterium kroppenstedtii (strain DSM 44385 / JCM 11950 / CIP 105744 / CCUG 35717).